A 222-amino-acid chain; its full sequence is 7-cyano-7-deazaguanine synthase (222 aa).

14-24 (FSGGQDSTTCL) is an ATP binding site. 4 residues coordinate Zn(2+): C192, C201, C204, and C207.

It belongs to the QueC family. As to quaternary structure, homodimer. Zn(2+) is required as a cofactor.

It carries out the reaction 7-carboxy-7-deazaguanine + NH4(+) + ATP = 7-cyano-7-deazaguanine + ADP + phosphate + H2O + H(+). It participates in purine metabolism; 7-cyano-7-deazaguanine biosynthesis. Catalyzes the ATP-dependent conversion of 7-carboxy-7-deazaguanine (CDG) to 7-cyano-7-deazaguanine (preQ(0)). This Clostridium acetobutylicum (strain ATCC 824 / DSM 792 / JCM 1419 / IAM 19013 / LMG 5710 / NBRC 13948 / NRRL B-527 / VKM B-1787 / 2291 / W) protein is 7-cyano-7-deazaguanine synthase.